The primary structure comprises 715 residues: MFNHHKVEIEWGGRPLILETGKIARQADGAVLATYGETVVLATVVSAKEPKPGIDFFPLTVNYQEKTFAAGKIPGGYFKREGRPSEKETLVSRLIDRPIRPLFVEGYKNDTQVIITVLQHDLENDPDILSMVAASAALTLSGVPFMGPVGAARVGYVGGEYILNPHLDEMAETKLDLVVAGTSDAVLMVESEAHELPEDVMLGAVMFGHRNFQPVIDAIIKLAEVAAKEPREFLPEDLSALEAEMLKVVEADLRDAYKITNKQARYDAVNAAKAKVKEAFLPEGAEAYKWTPEQVATVFKALQAKIVRWNILDTGSRIDGRDLRSVRPIVAEVGVLPRTHGSAVFTRGETQALVVATLGTGEDEQYVDSLTGTVKETFMLHYNFPPYSVGETGRMGSPGRREIGHGKLAWRAVHPLLPAPEQFPYTIRVVSEITESNGSSSMATVCGTSLALMDAGVPLAKPVAGIAMGLIKEDDRFAVLSDILGDEDHLGDMDFKVAGTAEGVTSLQMDIKITGITEEIMKVALEQAKDGRLHILGEMANALSESRGELGEFAPRIEVMHIPTDKIRDVIGTGGKVIREIVEKTGAKINIEDDGTVKIASSNGKEIEAARKWIHSIVAEPEVGEIYEGTVVKTADFGAFVNFFGPRDGLVHISQLAPERVQKTTDVVKEGDKVFVKLMGFDERGKVRLSMKVVDQETGKEIVQEKKEEKQEAEG.

Residues Asp488 and Asp494 each coordinate Mg(2+). Residues 555-614 (PRIEVMHIPTDKIRDVIGTGGKVIREIVEKTGAKINIEDDGTVKIASSNGKEIEAARKWI) enclose the KH domain. One can recognise an S1 motif domain in the interval 624-692 (GEIYEGTVVK…ERGKVRLSMK (69 aa)).

The protein belongs to the polyribonucleotide nucleotidyltransferase family. Mg(2+) serves as cofactor.

The protein resides in the cytoplasm. The catalysed reaction is RNA(n+1) + phosphate = RNA(n) + a ribonucleoside 5'-diphosphate. Involved in mRNA degradation. Catalyzes the phosphorolysis of single-stranded polyribonucleotides processively in the 3'- to 5'-direction. The protein is Polyribonucleotide nucleotidyltransferase of Chelativorans sp. (strain BNC1).